The primary structure comprises 212 residues: 2-phospho-L-lactate guanylyltransferase (212 aa).

It belongs to the CofC family. As to quaternary structure, homodimer.

The enzyme catalyses (2S)-2-phospholactate + GTP + H(+) = (2S)-lactyl-2-diphospho-5'-guanosine + diphosphate. Its pathway is cofactor biosynthesis; coenzyme F420 biosynthesis. In terms of biological role, guanylyltransferase that catalyzes the activation of (2S)-2-phospholactate (2-PL) as (2S)-lactyl-2-diphospho-5'-guanosine, via the condensation of 2-PL with GTP. It is involved in the biosynthesis of coenzyme F420, a hydride carrier cofactor. This Methanocorpusculum labreanum (strain ATCC 43576 / DSM 4855 / Z) protein is 2-phospho-L-lactate guanylyltransferase.